The chain runs to 215 residues: NADH-quinone oxidoreductase subunit C (215 aa).

Belongs to the complex I 30 kDa subunit family. In terms of assembly, NDH-1 is composed of 14 different subunits. Subunits NuoB, C, D, E, F, and G constitute the peripheral sector of the complex.

The protein resides in the cell inner membrane. It carries out the reaction a quinone + NADH + 5 H(+)(in) = a quinol + NAD(+) + 4 H(+)(out). In terms of biological role, NDH-1 shuttles electrons from NADH, via FMN and iron-sulfur (Fe-S) centers, to quinones in the respiratory chain. The immediate electron acceptor for the enzyme in this species is believed to be ubiquinone. Couples the redox reaction to proton translocation (for every two electrons transferred, four hydrogen ions are translocated across the cytoplasmic membrane), and thus conserves the redox energy in a proton gradient. This chain is NADH-quinone oxidoreductase subunit C, found in Francisella philomiragia subsp. philomiragia (strain ATCC 25017 / CCUG 19701 / FSC 153 / O#319-036).